Consider the following 94-residue polypeptide: Small ribosomal subunit protein uS19 (94 aa).

The protein belongs to the universal ribosomal protein uS19 family.

Protein S19 forms a complex with S13 that binds strongly to the 16S ribosomal RNA. This is Small ribosomal subunit protein uS19 from Syntrophomonas wolfei subsp. wolfei (strain DSM 2245B / Goettingen).